The chain runs to 377 residues: Transmembrane protein 237A (377 aa).

3 stretches are compositionally biased toward basic and acidic residues: residues M1 to P11, L43 to P64, and H74 to N87. The interval M1–E124 is disordered. 4 consecutive transmembrane segments (helical) span residues I198–V218, L239–F259, G273–L293, and P326–A346.

This sequence belongs to the TMEM237 family.

Its subcellular location is the membrane. The protein resides in the cell projection. It is found in the cilium. Functionally, component of the transition zone in primary cilia. Required for ciliogenesis. The chain is Transmembrane protein 237A (tmem237a) from Danio rerio (Zebrafish).